Here is a 232-residue protein sequence, read N- to C-terminus: Large ribosomal subunit protein uL1 (232 aa).

The protein belongs to the universal ribosomal protein uL1 family. In terms of assembly, part of the 50S ribosomal subunit.

In terms of biological role, binds directly to 23S rRNA. The L1 stalk is quite mobile in the ribosome, and is involved in E site tRNA release. Its function is as follows. Protein L1 is also a translational repressor protein, it controls the translation of the L11 operon by binding to its mRNA. The protein is Large ribosomal subunit protein uL1 of Chlamydia trachomatis serovar L2 (strain ATCC VR-902B / DSM 19102 / 434/Bu).